The chain runs to 171 residues: Peptide methionine sulfoxide reductase MsrA (171 aa).

The active site involves Cys-13.

Belongs to the MsrA Met sulfoxide reductase family.

The catalysed reaction is L-methionyl-[protein] + [thioredoxin]-disulfide + H2O = L-methionyl-(S)-S-oxide-[protein] + [thioredoxin]-dithiol. The enzyme catalyses [thioredoxin]-disulfide + L-methionine + H2O = L-methionine (S)-S-oxide + [thioredoxin]-dithiol. Its function is as follows. Has an important function as a repair enzyme for proteins that have been inactivated by oxidation. Catalyzes the reversible oxidation-reduction of methionine sulfoxide in proteins to methionine. The protein is Peptide methionine sulfoxide reductase MsrA of Mycobacterium ulcerans (strain Agy99).